A 137-amino-acid polypeptide reads, in one-letter code: Probable DNA-directed RNA polymerases I, II, and III subunit RPABC2 (137 aa).

Acidic residues-rich tracts occupy residues 1 to 27 and 34 to 43; these read MADEDDYQDMDNDDFVDDNEMEDVIEE and NEDEDDDNVD. The tract at residues 1 to 43 is disordered; sequence MADEDDYQDMDNDDFVDDNEMEDVIEEDPQRPDNEDEDDDNVD.

It belongs to the archaeal Rpo6/eukaryotic RPB6 RNA polymerase subunit family. As to quaternary structure, component of the RNA polymerase I (Pol I), RNA polymerase II (Pol II) and RNA polymerase III (Pol III) complexes consisting of at least 13, 12 and 17 subunits, respectively.

Its subcellular location is the nucleus. DNA-dependent RNA polymerases catalyze the transcription of DNA into RNA using the four ribonucleoside triphosphates as substrates. Common component of RNA polymerases I, II and III which synthesize ribosomal RNA precursors, mRNA precursors and many functional non-coding RNAs, and small RNAs, such as 5S rRNA and tRNAs, respectively. Pol II is the central component of the basal RNA polymerase II transcription machinery. Pols are composed of mobile elements that move relative to each other. In Pol II, RPB6 is part of the clamp element and together with parts of RPB1 and RPB2 forms a pocket to which the RPB4-RPB7 subcomplex binds. This chain is Probable DNA-directed RNA polymerases I, II, and III subunit RPABC2 (rpb-6), found in Caenorhabditis elegans.